An 82-amino-acid polypeptide reads, in one-letter code: Mu-conotoxin GVIIJ (82 aa).

A signal peptide spans 1-22; that stretch reads MKLTCVVIVAALLLTACQLITA. Positions 23 to 47 are excised as a propeptide; the sequence is LDCGGTQKHRALRSTIKLSLLRQHR. The residue at position 49 (tryptophan 49) is a 6'-bromotryptophan. 3 disulfide bridges follow: cysteine 50–cysteine 65, cysteine 57–cysteine 69, and cysteine 64–cysteine 76. Proline 53 carries the 4-hydroxyproline modification. A protein is bound at residue cysteine 71.

This sequence belongs to the conotoxin O1 superfamily. In terms of processing, cys-71 is a key residue that tethers to the channel by covalent attachment, leading to nearly irreversible inhibition (k(off) very low). In order to determine the solution structure without dimerization, this residue was mutated to Cys. Expressed by the venom duct.

The protein resides in the secreted. In terms of biological role, mu-conotoxins block voltage-gated sodium channels (Nav). This toxin (GVIIJ(SSG)) blocks Nav1.1/SCN1A (Kd=11 nM), Nav1.2/SCN2A (Kd=11 nM), Nav1.3/SCN3A (Kd=15 nM), Nav1.4/SCN4A (Kd=4.7 nM), Nav1.6/SCN8A (Kd=360 nM) and Nav1.7/SCN9A (Kd=41 nM). It binds the channel at the newly described site 8, which is composed by two surfaces whose one contains a non-disulfide-bonded cysteine (which is free to covalently bind the toxin Cys-71). It is noteworthy that coexpression of subunits beta-2 or beta-4 (but not beta-1 or beta-3) protects rNav1.1-1.7 against block by the toxin, since these subunits (thanks to their extracellular domain) covalently bind to the key cysteine of the channel, thus preventing the covalent binding of the toxin. This chain is Mu-conotoxin GVIIJ, found in Conus geographus (Geography cone).